Consider the following 717-residue polypeptide: Fatty acid oxidation complex subunit alpha (717 aa).

The tract at residues 1-189 (MIYQSPTIEV…KVGAIDAVVA (189 aa)) is enoyl-CoA hydratase/isomerase. D296 is a substrate binding site. A 3-hydroxyacyl-CoA dehydrogenase region spans residues 311–717 (KKVNSAAVLG…ANNGSYYQQA (407 aa)). Residues M324, D343, 400–402 (VVE), K407, and S429 each bind NAD(+). Catalysis depends on H450, which acts as the For 3-hydroxyacyl-CoA dehydrogenase activity. N453 provides a ligand contact to NAD(+). The substrate site is built by N500 and Y660.

It in the N-terminal section; belongs to the enoyl-CoA hydratase/isomerase family. This sequence in the C-terminal section; belongs to the 3-hydroxyacyl-CoA dehydrogenase family. In terms of assembly, heterotetramer of two alpha chains (FadB) and two beta chains (FadA).

The catalysed reaction is a (3S)-3-hydroxyacyl-CoA + NAD(+) = a 3-oxoacyl-CoA + NADH + H(+). It carries out the reaction a (3S)-3-hydroxyacyl-CoA = a (2E)-enoyl-CoA + H2O. It catalyses the reaction a 4-saturated-(3S)-3-hydroxyacyl-CoA = a (3E)-enoyl-CoA + H2O. The enzyme catalyses (3S)-3-hydroxybutanoyl-CoA = (3R)-3-hydroxybutanoyl-CoA. The catalysed reaction is a (3Z)-enoyl-CoA = a 4-saturated (2E)-enoyl-CoA. It carries out the reaction a (3E)-enoyl-CoA = a 4-saturated (2E)-enoyl-CoA. The protein operates within lipid metabolism; fatty acid beta-oxidation. Involved in the aerobic and anaerobic degradation of long-chain fatty acids via beta-oxidation cycle. Catalyzes the formation of 3-oxoacyl-CoA from enoyl-CoA via L-3-hydroxyacyl-CoA. It can also use D-3-hydroxyacyl-CoA and cis-3-enoyl-CoA as substrate. This is Fatty acid oxidation complex subunit alpha from Shewanella pealeana (strain ATCC 700345 / ANG-SQ1).